Consider the following 106-residue polypeptide: ATP-dependent Clp protease adapter protein ClpS (106 aa).

The protein belongs to the ClpS family. In terms of assembly, binds to the N-terminal domain of the chaperone ClpA.

In terms of biological role, involved in the modulation of the specificity of the ClpAP-mediated ATP-dependent protein degradation. In Salmonella gallinarum (strain 287/91 / NCTC 13346), this protein is ATP-dependent Clp protease adapter protein ClpS.